Here is a 72-residue protein sequence, read N- to C-terminus: Disintegrin cereberin (72 aa).

The Disintegrin domain occupies 1–72 (EAGEECDCGS…SADCPRNRFH (72 aa)). Intrachain disulfides connect Cys-6–Cys-21, Cys-8–Cys-16, Cys-15–Cys-38, Cys-29–Cys-35, Cys-34–Cys-59, and Cys-47–Cys-66. The short motif at 51–53 (RGD) is the Cell attachment site element. A disordered region spans residues 51 to 72 (RGDNPDDRCTGQSADCPRNRFH).

Belongs to the venom metalloproteinase (M12B) family. P-II subfamily. P-IIa sub-subfamily. Monomer (disintegrin). In terms of tissue distribution, expressed by the venom gland.

It localises to the secreted. Its function is as follows. Inhibits fibrinogen interaction with platelet. Acts by binding to alpha-IIb/beta-3 (ITGA2B/ITGB3) on the platelet surface and inhibits aggregation induced by ADP, thrombin, platelet-activating factor and collagen. This is Disintegrin cereberin from Crotalus cerberus (Arizona black rattlesnake).